Reading from the N-terminus, the 622-residue chain is Dopamine beta-hydroxylase (622 aa).

The Cytoplasmic portion of the chain corresponds to 1-20 (MQAHLSHQPCWSSLPSPSVR). The helical; Signal-anchor for type II membrane protein transmembrane segment at 21 to 41 (EAASMYGTAVAIFLVILVAAL) threads the bilayer. Residues 42–621 (RGSEPPESPF…TVPITTEADA (580 aa)) are Intragranular-facing. The DOMON domain occupies 61–177 (GILELSWNVS…DTVHLVYGIL (117 aa)). N-linked (GlcNAc...) asparagine glycans are attached at residues N68 and N188. Cystine bridges form between C158–C600, C236–C287, C273–C299, C394–C507, C398–C569, and C470–C492. Y234 is a catalytic residue. 2 residues coordinate Cu(2+): H266 and H267. H337 is a Cu(2+) binding site. S350 bears the Phosphoserine; by CaMK mark. H416 is an active-site residue. H416 and H418 together coordinate Cu(2+). N476 carries N-linked (GlcNAc...) asparagine glycosylation. M491 lines the Cu(2+) pocket. N570 carries an N-linked (GlcNAc...) asparagine glycan. The tract at residues 594–622 (EEPTPRCPIRQTQSPANPTVPITTEADAE) is disordered. Positions 603–615 (RQTQSPANPTVPI) are enriched in polar residues.

This sequence belongs to the copper type II ascorbate-dependent monooxygenase family. Homotetramer; composed of two disulfide-linked dimers. Requires Cu(2+) as cofactor. In terms of processing, proteolytic cleavage after the membrane-anchor leads to the release of the soluble form. Post-translationally, N-glycosylated. As to expression, detected in adrenal gland secretory granules (at protein level). Detected in adrenal gland.

Its subcellular location is the cytoplasmic vesicle. It is found in the secretory vesicle lumen. The protein resides in the secretory vesicle. The protein localises to the chromaffin granule lumen. It localises to the secretory vesicle membrane. Its subcellular location is the chromaffin granule membrane. It catalyses the reaction dopamine + 2 L-ascorbate + O2 = (R)-noradrenaline + 2 monodehydro-L-ascorbate radical + H2O. It functions in the pathway catecholamine biosynthesis; (R)-noradrenaline biosynthesis; (R)-noradrenaline from dopamine: step 1/1. Functionally, catalyzes the hydroxylation of dopamine to noradrenaline (also known as norepinephrine), and is thus vital for regulation of these neurotransmitters. This is Dopamine beta-hydroxylase (Dbh) from Mus musculus (Mouse).